A 229-amino-acid chain; its full sequence is N-acetyltransferase MPR1 (229 aa).

Residues 65-219 (FNLEIESGKT…DAIIYGKDLT (155 aa)) form the N-acetyltransferase domain. N135 lines the substrate pocket. 145 to 150 (RGQKVG) provides a ligand contact to CoA. Substrate is bound at residue 172 to 173 (NL).

The protein belongs to the acetyltransferase family. In terms of assembly, homodimer. Post-translationally, not glycosylated.

The protein resides in the cytoplasm. It is found in the mitochondrion. The enzyme catalyses L-glutamate 5-semialdehyde + acetyl-CoA = N-acetyl-L-glutamate 5-semialdehyde + CoA + H(+). In terms of biological role, N-acetyltransferase involved in oxidative stress resistance. Acetylates the toxic proline metabolism intermediate (S)-1-pyrroline-5-carboxylate (P5C), or more likely its spontaneously forming tautomer glutamate-5-semialdehyde (GSA) into N-acetyl-GSA for arginine synthesis in the mitochondria. P5C has been shown to increase the levels of reactive oxygen species (ROS) in the cell by inhibiting the function of the respiratory chain in the mitochondria. The enzyme is able to reduce intracellular ROS levels under P5C-induced oxidative stress and protects cells from damage by oxidative stress. Also acetylates and thereby detoxifies the proline analog azetidine-2-carboxylate (AZC), however it is unlikely that AZC is a natural substrate as it occurs only in plants belonging to the Lilaceae family. Does not acetylate proline. The sequence is that of N-acetyltransferase MPR1 from Saccharomyces cerevisiae (Baker's yeast).